The chain runs to 182 residues: Large ribosomal subunit protein uL6 (182 aa).

The protein belongs to the universal ribosomal protein uL6 family. As to quaternary structure, part of the 50S ribosomal subunit.

Its function is as follows. This protein binds to the 23S rRNA, and is important in its secondary structure. It is located near the subunit interface in the base of the L7/L12 stalk, and near the tRNA binding site of the peptidyltransferase center. The polypeptide is Large ribosomal subunit protein uL6 (Methanococcus maripaludis (strain C5 / ATCC BAA-1333)).